The sequence spans 222 residues: NADH dehydrogenase [ubiquinone] iron-sulfur protein 8-B, mitochondrial (222 aa).

2 consecutive 4Fe-4S ferredoxin-type domains span residues 114-143 (RRYP…IEAE) and 153-182 (TRYD…EGPN). [4Fe-4S] cluster contacts are provided by cysteine 123, cysteine 126, cysteine 129, cysteine 133, cysteine 162, cysteine 165, cysteine 168, and cysteine 172.

The protein belongs to the complex I 23 kDa subunit family. In terms of assembly, complex I is composed of at least 49 different subunits. This is a component of the iron-sulfur (IP) fragment of the enzyme. Requires [4Fe-4S] cluster as cofactor.

Its subcellular location is the mitochondrion. It carries out the reaction a ubiquinone + NADH + 5 H(+)(in) = a ubiquinol + NAD(+) + 4 H(+)(out). Core subunit of the mitochondrial membrane respiratory chain NADH dehydrogenase (Complex I) that is believed to belong to the minimal assembly required for catalysis. Complex I functions in the transfer of electrons from NADH to the respiratory chain. The immediate electron acceptor for the enzyme is believed to be ubiquinone. May donate electrons to ubiquinone. The protein is NADH dehydrogenase [ubiquinone] iron-sulfur protein 8-B, mitochondrial of Arabidopsis thaliana (Mouse-ear cress).